Here is a 185-residue protein sequence, read N- to C-terminus: Ribosome-recycling factor (185 aa).

Belongs to the RRF family.

It localises to the cytoplasm. Responsible for the release of ribosomes from messenger RNA at the termination of protein biosynthesis. May increase the efficiency of translation by recycling ribosomes from one round of translation to another. This is Ribosome-recycling factor from Myxococcus xanthus (strain DK1622).